The primary structure comprises 75 residues: RNA-binding protein Hfq (75 aa).

The region spanning 9 to 69 (DQFLNQLRKE…ISTFAPERNI (61 aa)) is the Sm domain.

This sequence belongs to the Hfq family. In terms of assembly, homohexamer.

Its function is as follows. RNA chaperone that binds small regulatory RNA (sRNAs) and mRNAs to facilitate mRNA translational regulation in response to envelope stress, environmental stress and changes in metabolite concentrations. Also binds with high specificity to tRNAs. The protein is RNA-binding protein Hfq of Geobacillus kaustophilus (strain HTA426).